Here is a 228-residue protein sequence, read N- to C-terminus: MSRILFKILAALVAAFLLYNLWVLGHIIYWRDHNPGASSFMNEQLARLQQDDPEAELRHKWVPYDKISPNLKRALIASEDARFVDHEGFDWDGIEAAFEKNLKKGKIVAGGSTISQQLAKNLFLSSGKTPWRKLEEALITVMLETVLDKRRIYEIYLNVIEWGNGVFGAEAASRYYFRTGASRLSSSQAAKLAAMVPNPRYYDEHRNAPGLARKTRIIQRRMAYVELP.

A helical membrane pass occupies residues 8–28; sequence ILAALVAAFLLYNLWVLGHII.

This sequence belongs to the glycosyltransferase 51 family.

It is found in the cell inner membrane. It carries out the reaction [GlcNAc-(1-&gt;4)-Mur2Ac(oyl-L-Ala-gamma-D-Glu-L-Lys-D-Ala-D-Ala)](n)-di-trans,octa-cis-undecaprenyl diphosphate + beta-D-GlcNAc-(1-&gt;4)-Mur2Ac(oyl-L-Ala-gamma-D-Glu-L-Lys-D-Ala-D-Ala)-di-trans,octa-cis-undecaprenyl diphosphate = [GlcNAc-(1-&gt;4)-Mur2Ac(oyl-L-Ala-gamma-D-Glu-L-Lys-D-Ala-D-Ala)](n+1)-di-trans,octa-cis-undecaprenyl diphosphate + di-trans,octa-cis-undecaprenyl diphosphate + H(+). The protein operates within cell wall biogenesis; peptidoglycan biosynthesis. Its function is as follows. Peptidoglycan polymerase that catalyzes glycan chain elongation from lipid-linked precursors. The protein is Biosynthetic peptidoglycan transglycosylase of Chromobacterium violaceum (strain ATCC 12472 / DSM 30191 / JCM 1249 / CCUG 213 / NBRC 12614 / NCIMB 9131 / NCTC 9757 / MK).